The primary structure comprises 55 residues: MAKPTTVKIKLVSTADTGFFYVTKKNPRTQTEKLSFRKYDPVVRKHVDFKEAKIK.

The protein belongs to the bacterial ribosomal protein bL33 family.

The chain is Large ribosomal subunit protein bL33 from Rhizorhabdus wittichii (strain DSM 6014 / CCUG 31198 / JCM 15750 / NBRC 105917 / EY 4224 / RW1) (Sphingomonas wittichii).